We begin with the raw amino-acid sequence, 147 residues long: Protein SprT-like (147 aa).

Residues 5 to 142 enclose the SprT-like domain; sequence DYVNEVSLED…SFCRGHLKEI (138 aa). Histidine 64 serves as a coordination point for Zn(2+). The active site involves glutamate 65. Histidine 68 contacts Zn(2+).

The protein belongs to the SprT family. Zn(2+) serves as cofactor.

It is found in the cytoplasm. This Streptococcus uberis (strain ATCC BAA-854 / 0140J) protein is Protein SprT-like.